We begin with the raw amino-acid sequence, 303 residues long: Agmatinase (303 aa).

Mn(2+) is bound by residues His126, Asp149, His151, Asp153, Asp230, and Asp232.

Belongs to the arginase family. Agmatinase subfamily. It depends on Mn(2+) as a cofactor.

The catalysed reaction is agmatine + H2O = urea + putrescine. Catalyzes the formation of putrescine from agmatine. The chain is Agmatinase (speB) from Blochmanniella floridana.